Here is a 135-residue protein sequence, read N- to C-terminus: Mediator of RNA polymerase II transcription subunit 10 (135 aa).

It belongs to the Mediator complex subunit 10 family. In terms of assembly, component of the Mediator complex, which is composed of MED1, MED4, MED6, MED7, MED8, MED9, MED10, MED11, MED12, MED13, MED13L, MED14, MED15, MED16, MED17, MED18, MED19, MED20, MED21, MED22, MED23, MED24, MED25, MED26, MED27, MED29, MED30, MED31, CCNC, CDK8 and CDC2L6/CDK11. The MED12, MED13, CCNC and CDK8 subunits form a distinct module termed the CDK8 module. Mediator containing the CDK8 module is less active than Mediator lacking this module in supporting transcriptional activation. Individual preparations of the Mediator complex lacking one or more distinct subunits have been variously termed ARC, CRSP, DRIP, PC2, SMCC and TRAP.

The protein resides in the nucleus. Its function is as follows. Component of the Mediator complex, a coactivator involved in the regulated transcription of nearly all RNA polymerase II-dependent genes. Mediator functions as a bridge to convey information from gene-specific regulatory proteins to the basal RNA polymerase II transcription machinery. Mediator is recruited to promoters by direct interactions with regulatory proteins and serves as a scaffold for the assembly of a functional preinitiation complex with RNA polymerase II and the general transcription factors. The chain is Mediator of RNA polymerase II transcription subunit 10 (Med10) from Mus musculus (Mouse).